The sequence spans 396 residues: Elongation factor Tu (396 aa).

Residues 10 to 205 form the tr-type G domain; sequence KPHVNIGTIG…AVDESIPDPV (196 aa). The interval 19–26 is G1; it reads GHVDHGKT. 19–26 provides a ligand contact to GTP; sequence GHVDHGKT. Thr26 serves as a coordination point for Mg(2+). Residues 62 to 66 form a G2 region; that stretch reads GITIN. The G3 stretch occupies residues 83–86; that stretch reads DAPG. GTP is bound by residues 83–87 and 138–141; these read DAPGH and NKAD. Residues 138–141 form a G4 region; the sequence is NKAD. The interval 175–177 is G5; that stretch reads SAL.

This sequence belongs to the TRAFAC class translation factor GTPase superfamily. Classic translation factor GTPase family. EF-Tu/EF-1A subfamily. In terms of assembly, monomer.

The protein localises to the cytoplasm. It catalyses the reaction GTP + H2O = GDP + phosphate + H(+). Its function is as follows. GTP hydrolase that promotes the GTP-dependent binding of aminoacyl-tRNA to the A-site of ribosomes during protein biosynthesis. This chain is Elongation factor Tu, found in Rhodococcus jostii (strain RHA1).